Consider the following 221-residue polypeptide: Protein-L-isoaspartate O-methyltransferase (221 aa).

S60 is an active-site residue.

This sequence belongs to the methyltransferase superfamily. L-isoaspartyl/D-aspartyl protein methyltransferase family.

It localises to the cytoplasm. It catalyses the reaction [protein]-L-isoaspartate + S-adenosyl-L-methionine = [protein]-L-isoaspartate alpha-methyl ester + S-adenosyl-L-homocysteine. In terms of biological role, catalyzes the methyl esterification of L-isoaspartyl residues in peptides and proteins that result from spontaneous decomposition of normal L-aspartyl and L-asparaginyl residues. It plays a role in the repair and/or degradation of damaged proteins. The polypeptide is Protein-L-isoaspartate O-methyltransferase (Rhodospirillum centenum (strain ATCC 51521 / SW)).